Consider the following 167-residue polypeptide: MMGSNYPEHGTKPRSAKYHKQQNHRVVRKQPPRPAVSDRHNIYITSKTDFKAQQRRCEELINSGAHEIFLHCMGFSVTRGLNIALRLVQNSDGALSYAINTSTVQLVDELHPLCDAEDITFRQRNNSALHIKILNNSLFDIAVPQPSQSQTQAQSLGQFRGKAKARQ.

The disordered stretch occupies residues 1–36 (MMGSNYPEHGTKPRSAKYHKQQNHRVVRKQPPRPAV). Residues 12–31 (KPRSAKYHKQQNHRVVRKQP) are compositionally biased toward basic residues.

In terms of assembly, interacts with Smn.

The protein resides in the nucleus. It is found in the nucleolus. Its subcellular location is the cytoplasm. It localises to the cytoplasmic granule. In terms of biological role, component of ribonuclease P, a protein complex that generates mature tRNA molecules by cleaving their 5'-ends. Also a component of RNase MRP complex, which cleaves pre-rRNA sequences. This Drosophila melanogaster (Fruit fly) protein is Ribonuclease P protein subunit p20.